The primary structure comprises 185 residues: MSEEELTNGPGPEPQPEPLEVESAPLEAAPAGEPDKALLEAQQQASENWDRFVRAQAEMENLRRRLEKDIQNAHKYALEKFAKELLPVMDSLELGIAASTGDAPDVAKLREGAELTLKQFKSVFEKFGIAVVDPLGEKFNPEQHQAMAMEPAGEAEPNTVVKVFQKGYLLNDRLLRPALVVVAQA.

The segment at M1–Q44 is disordered.

This sequence belongs to the GrpE family. In terms of assembly, homodimer.

The protein resides in the cytoplasm. Participates actively in the response to hyperosmotic and heat shock by preventing the aggregation of stress-denatured proteins, in association with DnaK and GrpE. It is the nucleotide exchange factor for DnaK and may function as a thermosensor. Unfolded proteins bind initially to DnaJ; upon interaction with the DnaJ-bound protein, DnaK hydrolyzes its bound ATP, resulting in the formation of a stable complex. GrpE releases ADP from DnaK; ATP binding to DnaK triggers the release of the substrate protein, thus completing the reaction cycle. Several rounds of ATP-dependent interactions between DnaJ, DnaK and GrpE are required for fully efficient folding. The polypeptide is Protein GrpE (Methylococcus capsulatus (strain ATCC 33009 / NCIMB 11132 / Bath)).